The sequence spans 201 residues: Small ribosomal subunit protein uS4c (201 aa).

The segment at 15-43 is disordered; it reads LGALPGLTNKRPRAGSDLRNQSRSGKRSQ. In terms of domain architecture, S4 RNA-binding spans 89–149; it reads MRLDNILFRL…DEQKSIALIQ (61 aa).

Component of the chloroplast small ribosomal subunit (SSU). Mature 70S chloroplast ribosomes of higher plants consist of a small (30S) and a large (50S) subunit. The 30S small subunit contains 1 molecule of ribosomal RNA (16S rRNA) and 24 different proteins. The 50S large subunit contains 3 rRNA molecules (23S, 5S and 4.5S rRNA) and 33 different proteins.

The protein localises to the plastid. Its subcellular location is the chloroplast. Functionally, component of the chloroplast ribosome (chloro-ribosome), a dedicated translation machinery responsible for the synthesis of chloroplast genome-encoded proteins, including proteins of the transcription and translation machinery and components of the photosynthetic apparatus. In Spinacia oleracea (Spinach), this protein is Small ribosomal subunit protein uS4c (rps4).